Consider the following 71-residue polypeptide: Cytotoxic linear peptide IsCT2 (71 aa).

Residues 1-23 form the signal peptide; sequence MKTQFAILLVALVLFQMFAQSEA. Phe36 carries the post-translational modification Phenylalanine amide. Positions 40–71 are excised as a propeptide; sequence ALNNDLDLDGLDELFDGEISQADVDFLKELMR.

Belongs to the non-disulfide-bridged peptide (NDBP) superfamily. Short antimicrobial peptide (group 4) family. In terms of processing, isCT2F is an enzymatic proteolytic cleavage product of IsCT2 by the proteases present in the venom. Expressed by the venom gland.

It localises to the secreted. The protein localises to the target cell membrane. Functionally, isCT2 shows weak hemolytic activity and antibacterial activity against both Gram-positive and Gram-negative bacteria probably by forming pores in the cell membrane. IsCT2 adopts an amphipathic alpha-helical structure. In terms of biological role, isCT2f shows neither hemolytic, nor antibacterial activities, surely due to the fact that it cannot apply amphipathic alpha-helical structure. This is Cytotoxic linear peptide IsCT2 from Opisthacanthus madagascariensis (Scorpion).